A 290-amino-acid chain; its full sequence is 2-dehydro-3-deoxyphosphooctonate aldolase (290 aa).

This sequence belongs to the KdsA family.

The protein localises to the cytoplasm. The catalysed reaction is D-arabinose 5-phosphate + phosphoenolpyruvate + H2O = 3-deoxy-alpha-D-manno-2-octulosonate-8-phosphate + phosphate. This Pisum sativum (Garden pea) protein is 2-dehydro-3-deoxyphosphooctonate aldolase (KDSA).